We begin with the raw amino-acid sequence, 423 residues long: Deoxyguanosinetriphosphate triphosphohydrolase-like protein (423 aa).

One can recognise an HD domain in the interval 66–216; the sequence is RLTHSLEVAQ…MDFSDDIAYS (151 aa).

The protein belongs to the dGTPase family. Type 2 subfamily.

The protein is Deoxyguanosinetriphosphate triphosphohydrolase-like protein of Corynebacterium diphtheriae (strain ATCC 700971 / NCTC 13129 / Biotype gravis).